The sequence spans 476 residues: Transcription factor EB (476 aa).

Disordered stretches follow at residues Met-1 to Pro-66 and His-107 to Ser-142. Positions Met-1–Leu-167 are interaction with ACSS2. Low complexity predominate over residues Gln-26–Gln-44. 4 positions are modified to phosphoserine: Ser-109, Ser-114, Ser-122, and Ser-138. Over residues Ser-132 to Ser-142 the composition is skewed to low complexity. The Nuclear export signal signature appears at Gly-136 to Pro-153. Position 142 is a phosphoserine; by MTOR (Ser-142). The interval Glu-156–Met-165 is strong transcription activation domain. Position 183 is a phosphothreonine (Thr-183). Ser-211 is modified (phosphoserine; by MTOR). Cys-212 is modified (S-(2,3-dicarboxypropyl)cysteine). Positions Gln-235–Met-288 constitute a bHLH domain. A Nuclear localization signal motif is present at residues Arg-245–Arg-248. The segment at Leu-298–Leu-319 is leucine-zipper. Ser-332 carries the phosphoserine modification. Residues Glu-349 to Lys-430 form a disordered region. A compositionally biased stretch (pro residues) spans Pro-369–Pro-390. 5 positions are modified to phosphoserine: Ser-423, Ser-441, Ser-466, Ser-467, and Ser-469. The span at Ser-447–Ser-469 shows a compositional bias: low complexity. The tract at residues Ser-447–Leu-476 is disordered.

Belongs to the MiT/TFE family. In terms of assembly, homodimer and heterodimer; with TFE3 or MITF. Interacts (when phosphorylated by MTOR) with YWHAZ; promoting retention in the cytosol. Interacts with IRGM; promoting association between TFEB and PPP3CB and dephosphorylation. Interacts with small GTPases Rag (RagA/RRAGA, RagB/RRAGB, RagC/RRAGC and/or RagD/RRAGD); promoting its recruitment to lysosomal membrane in the presence of nutrients. Interacts with ACSS2. In terms of processing, phosphorylation at Ser-211 by MTOR via non-canonical mTORC1 pathway regulates its subcellular location and activity. When nutrients are present, phosphorylation by MTOR promotes association with 14-3-3/YWHA adapters and retention in the cytosol. Inhibition of mTORC1, starvation and lysosomal disruption, promotes dephosphorylation by calcineurin PPP3CB and translocation to the nucleus. Dephosphorylated by calcineurin PPP3CB in response to lysosomal Ca(2+) release. IRGM promotes dephosphorylation by calcineurin PPP3CB, resulting in TFEB nuclear translocation and stimulation of lysosomal biogenesis. Dephosphorylated by phosphatase PPP3CA following Coxsackievirus B3 infection, leading to nuclear translocation. Exported from the nucleus in a mTORC1-dependent manner in response to nutrient availability. Post-translationally, alkylated via a non-enzymatic covalent modification. Itaconate, an anti-inflammatory metabolite generated in response to lipopolysaccharide, alkylates Cys-212, preventing association with 14-3-3/YWHA adapters, thereby promoting nuclear translocation and activity. Sumoylated; does not affect dimerization with MITF. In terms of processing, (Microbial infection) Cleavage by Coxsackievirus B3 protease 3C after site Gln-60. This non-phosphorylated cleavage product retains its ability to interact with TFEB, TFE3 or MITF and presents impaired transcriptional activity, resulting in disruption of lysosomal functions and increased viral infection.

It is found in the nucleus. Its subcellular location is the cytoplasm. The protein resides in the cytosol. The protein localises to the lysosome membrane. With respect to regulation, inhibited by eltrombopag drug, which binds to the bHLH domain and disrupts DNA-binding. Transcription factor that acts as a master regulator of lysosomal biogenesis, autophagy, lysosomal exocytosis, lipid catabolism, energy metabolism and immune response. Specifically recognizes and binds E-box sequences (5'-CANNTG-3'); efficient DNA-binding requires dimerization with itself or with another MiT/TFE family member such as TFE3 or MITF. Involved in the cellular response to amino acid availability by acting downstream of MTOR: in the presence of nutrients, TFEB phosphorylation by MTOR promotes its cytosolic retention and subsequent inactivation. Upon starvation or lysosomal stress, inhibition of MTOR induces TFEB dephosphorylation, resulting in nuclear localization and transcription factor activity. Specifically recognizes and binds the CLEAR-box sequence (5'-GTCACGTGAC-3') present in the regulatory region of many lysosomal genes, leading to activate their expression, thereby playing a central role in expression of lysosomal genes. Regulates lysosomal positioning in response to nutrient deprivation by promoting the expression of PIP4P1. Acts as a positive regulator of autophagy by promoting expression of genes involved in autophagy. In association with TFE3, activates the expression of CD40L in T-cells, thereby playing a role in T-cell-dependent antibody responses in activated CD4(+) T-cells and thymus-dependent humoral immunity. Specifically recognizes the gamma-E3 box, a subset of E-boxes, present in the heavy-chain immunoglobulin enhancer. Plays a role in the signal transduction processes required for normal vascularization of the placenta. Involved in the immune response to infection by the bacteria S.aureus, S.typhimurium or S.enterica: infection promotes itaconate production, leading to alkylation, resulting in nuclear localization and transcription factor activity. Itaconate-mediated alkylation activates TFEB-dependent lysosomal biogenesis, facilitating the bacteria clearance during the antibacterial innate immune response. In association with ACSS2, promotes the expression of genes involved in lysosome biogenesis and both autophagy upon glucose deprivation. In Homo sapiens (Human), this protein is Transcription factor EB.